A 627-amino-acid polypeptide reads, in one-letter code: 1-deoxy-D-xylulose-5-phosphate synthase (627 aa).

Thiamine diphosphate is bound by residues histidine 87 and 128–130 (GHS). Aspartate 159 serves as a coordination point for Mg(2+). Thiamine diphosphate contacts are provided by residues 160–161 (GA), asparagine 188, phenylalanine 295, and glutamate 375. Asparagine 188 contacts Mg(2+).

It belongs to the transketolase family. DXPS subfamily. Homodimer. Mg(2+) serves as cofactor. Thiamine diphosphate is required as a cofactor.

It carries out the reaction D-glyceraldehyde 3-phosphate + pyruvate + H(+) = 1-deoxy-D-xylulose 5-phosphate + CO2. It participates in metabolic intermediate biosynthesis; 1-deoxy-D-xylulose 5-phosphate biosynthesis; 1-deoxy-D-xylulose 5-phosphate from D-glyceraldehyde 3-phosphate and pyruvate: step 1/1. Catalyzes the acyloin condensation reaction between C atoms 2 and 3 of pyruvate and glyceraldehyde 3-phosphate to yield 1-deoxy-D-xylulose-5-phosphate (DXP). This is 1-deoxy-D-xylulose-5-phosphate synthase from Pseudomonas paraeruginosa (strain DSM 24068 / PA7) (Pseudomonas aeruginosa (strain PA7)).